Here is a 370-residue protein sequence, read N- to C-terminus: 3-dehydroquinate synthase (370 aa).

Residues 108–112 (GVVGD), 132–133 (TT), Lys-145, and Lys-154 each bind NAD(+). Positions 187, 250, and 268 each coordinate Zn(2+).

It belongs to the sugar phosphate cyclases superfamily. Dehydroquinate synthase family. The cofactor is Co(2+). Zn(2+) serves as cofactor. NAD(+) is required as a cofactor.

The protein resides in the cytoplasm. The catalysed reaction is 7-phospho-2-dehydro-3-deoxy-D-arabino-heptonate = 3-dehydroquinate + phosphate. It functions in the pathway metabolic intermediate biosynthesis; chorismate biosynthesis; chorismate from D-erythrose 4-phosphate and phosphoenolpyruvate: step 2/7. In terms of biological role, catalyzes the conversion of 3-deoxy-D-arabino-heptulosonate 7-phosphate (DAHP) to dehydroquinate (DHQ). This is 3-dehydroquinate synthase from Caulobacter vibrioides (strain NA1000 / CB15N) (Caulobacter crescentus).